A 159-amino-acid polypeptide reads, in one-letter code: 17 kDa surface antigen (159 aa).

The signal sequence occupies residues 1-19 (MKLLSKIMIIALAASMLQA). A lipid anchor (N-palmitoyl cysteine) is attached at Cys-20. Cys-20 carries S-diacylglycerol cysteine lipidation.

This sequence belongs to the rickettsiale 17 kDa surface antigen family.

It localises to the cell outer membrane. The polypeptide is 17 kDa surface antigen (omp) (Rickettsia felis (strain ATCC VR-1525 / URRWXCal2) (Rickettsia azadi)).